Consider the following 334-residue polypeptide: Phosphate acyltransferase (334 aa).

Belongs to the PlsX family. In terms of assembly, homodimer. Probably interacts with PlsY.

The protein resides in the cytoplasm. It catalyses the reaction a fatty acyl-[ACP] + phosphate = an acyl phosphate + holo-[ACP]. The protein operates within lipid metabolism; phospholipid metabolism. Functionally, catalyzes the reversible formation of acyl-phosphate (acyl-PO(4)) from acyl-[acyl-carrier-protein] (acyl-ACP). This enzyme utilizes acyl-ACP as fatty acyl donor, but not acyl-CoA. The sequence is that of Phosphate acyltransferase from Fervidobacterium nodosum (strain ATCC 35602 / DSM 5306 / Rt17-B1).